A 142-amino-acid chain; its full sequence is Large ribosomal subunit protein uL11 (142 aa).

The protein belongs to the universal ribosomal protein uL11 family. In terms of assembly, part of the ribosomal stalk of the 50S ribosomal subunit. Interacts with L10 and the large rRNA to form the base of the stalk. L10 forms an elongated spine to which L12 dimers bind in a sequential fashion forming a multimeric L10(L12)X complex. In terms of processing, one or more lysine residues are methylated.

Its function is as follows. Forms part of the ribosomal stalk which helps the ribosome interact with GTP-bound translation factors. This chain is Large ribosomal subunit protein uL11, found in Proteus mirabilis (strain HI4320).